The primary structure comprises 187 residues: Large ribosomal subunit protein uL5 (187 aa).

This sequence belongs to the universal ribosomal protein uL5 family. In terms of assembly, part of the 50S ribosomal subunit; part of the 5S rRNA/L5/L18/L25 subcomplex. Contacts the 5S rRNA and the P site tRNA. Forms a bridge to the 30S subunit in the 70S ribosome.

This is one of the proteins that bind and probably mediate the attachment of the 5S RNA into the large ribosomal subunit, where it forms part of the central protuberance. In the 70S ribosome it contacts protein S13 of the 30S subunit (bridge B1b), connecting the 2 subunits; this bridge is implicated in subunit movement. Contacts the P site tRNA; the 5S rRNA and some of its associated proteins might help stabilize positioning of ribosome-bound tRNAs. This chain is Large ribosomal subunit protein uL5, found in Brachyspira hyodysenteriae (strain ATCC 49526 / WA1).